A 605-amino-acid chain; its full sequence is Podocalyxin-like protein 2 (605 aa).

Residues 1-32 form the signal peptide; that stretch reads MGRLLRAARLPPLLSPLLLLLVGGAFLGACVA. At 33–500 the chain is on the extracellular side; that stretch reads GSDEPGPEGL…ASQVRSDYGT (468 aa). O-linked (Xyl...) (chondroitin sulfate) serine glycosylation is present at serine 79. Residues tyrosine 97 and tyrosine 118 each carry the sulfotyrosine modification. The tract at residues 129–134 is O-glycosylated at one site; it reads SIEDTS. Residues 129–347 are disordered; that stretch reads SIEDTSQAQE…PGDMELTPSS (219 aa). O-linked (GalNAc...) serine glycosylation is present at serine 144. Acidic residues predominate over residues 162–189; the sequence is EEEEEEEEEEEREKEEVEKQEEEEEEEL. A glycan (N-linked (GlcNAc...) asparagine) is linked at asparagine 193. Residues 207-217 show a composition bias toward polar residues; that stretch reads SLTSSSQTPGA. Composition is skewed to low complexity over residues 241–255 and 288–298; these read PSLL…TVTP and EATAGAAGLSG. A glycan (N-linked (GlcNAc...) asparagine) is linked at asparagine 395. The helical transmembrane segment at 501–521 threads the bilayer; sequence LFVVLVVIGAICIIIIALGLL. The Cytoplasmic portion of the chain corresponds to 522–605; sequence YNCWQRRLPK…SDVFEEDTHL (84 aa). The disordered stretch occupies residues 554–605; it reads LDVASDSQSEMQEKHPSLNGGGALNGPGSWGALMGGKRDPEDSDVFEEDTHL. Serine 570 bears the Phosphoserine mark. Positions 572–582 are enriched in gly residues; that stretch reads NGGGALNGPGS. The segment covering 594–605 has biased composition (acidic residues); the sequence is EDSDVFEEDTHL. Phosphoserine is present on serine 596.

Belongs to the podocalyxin family. In terms of assembly, homodimer; disulfide-linked. Interacts with SELL, SELE and SELP. In terms of processing, O-glycosylated; contains chondroitin sulfate. Displays sialylated O-linked oligosaccharides. Post-translationally, sulfation is necessary for interaction with SELL. Sialylated O-linked oligosaccharides are necessary for interaction with SELL, SELE and SELP. As to expression, expressed in T-cells, B-cells and monocytes. Expression is higher on memory and germinal center cells than on naive B-cells (at protein level). Highly expressed in brain. Moderately expressed in pancreas, kidney and lymphoid node. Weakly expressed in liver. Detected in both endothelial cells and CD34+ bone marrow cells.

The protein localises to the membrane. In terms of biological role, acts as a ligand for vascular selectins. Mediates rapid rolling of leukocytes over vascular surfaces through high affinity divalent cation-dependent interactions with E-, P- and L-selectins. The sequence is that of Podocalyxin-like protein 2 (PODXL2) from Homo sapiens (Human).